A 352-amino-acid polypeptide reads, in one-letter code: Small ribosomal subunit biogenesis GTPase RsgA 2 (352 aa).

One can recognise a CP-type G domain in the interval 100–257; it reads RQDGQIIATN…VIDTPGMREL (158 aa). Residues 147 to 150 and 199 to 207 each bind GTP; these read TKAD and GSSGVGKST. Zn(2+) is bound by residues Cys-278, Cys-283, His-285, and Cys-291.

The protein belongs to the TRAFAC class YlqF/YawG GTPase family. RsgA subfamily. Monomer. Associates with 30S ribosomal subunit, binds 16S rRNA. It depends on Zn(2+) as a cofactor.

The protein resides in the cytoplasm. One of several proteins that assist in the late maturation steps of the functional core of the 30S ribosomal subunit. Helps release RbfA from mature subunits. May play a role in the assembly of ribosomal proteins into the subunit. Circularly permuted GTPase that catalyzes slow GTP hydrolysis, GTPase activity is stimulated by the 30S ribosomal subunit. The protein is Small ribosomal subunit biogenesis GTPase RsgA 2 of Lactiplantibacillus plantarum (strain ATCC BAA-793 / NCIMB 8826 / WCFS1) (Lactobacillus plantarum).